We begin with the raw amino-acid sequence, 248 residues long: Adenosylcobinamide-GDP ribazoletransferase (248 aa).

Helical transmembrane passes span 3-23 (ELKALILSIQFMTGIPIPINI), 35-55 (SYFPVVGLLIGGILYIAYLLL), 63-83 (IVMTFLVAFSYILTRGMHIDG), 109-129 (LGTNGVLALVFMVILKILFLS), 135-155 (LLFSALLVSPVIARLSVVFSI), 180-199 (FVIALLISTIAGYFVMPLKD), 200-219 (LALLYVISLSFTCLISKYIS), and 228-248 (DTLGAVNEFVELIAFIYFSIL).

Belongs to the CobS family. The cofactor is Mg(2+).

The protein localises to the cell membrane. The enzyme catalyses alpha-ribazole + adenosylcob(III)inamide-GDP = adenosylcob(III)alamin + GMP + H(+). It carries out the reaction alpha-ribazole 5'-phosphate + adenosylcob(III)inamide-GDP = adenosylcob(III)alamin 5'-phosphate + GMP + H(+). The protein operates within cofactor biosynthesis; adenosylcobalamin biosynthesis; adenosylcobalamin from cob(II)yrinate a,c-diamide: step 7/7. Its function is as follows. Joins adenosylcobinamide-GDP and alpha-ribazole to generate adenosylcobalamin (Ado-cobalamin). Also synthesizes adenosylcobalamin 5'-phosphate from adenosylcobinamide-GDP and alpha-ribazole 5'-phosphate. This chain is Adenosylcobinamide-GDP ribazoletransferase, found in Caldanaerobacter subterraneus subsp. tengcongensis (strain DSM 15242 / JCM 11007 / NBRC 100824 / MB4) (Thermoanaerobacter tengcongensis).